Here is a 622-residue protein sequence, read N- to C-terminus: Ferredoxin-fold anticodon-binding domain-containing protein 1 homolog (622 aa).

The FDX-ACB domain maps to 529–622; the sequence is LYPPCYVHDV…IQRQLHVSPR (94 aa).

This chain is Ferredoxin-fold anticodon-binding domain-containing protein 1 homolog (Fdxacb1), found in Mus musculus (Mouse).